We begin with the raw amino-acid sequence, 654 residues long: Smc-like protein Sph3 (654 aa).

2 coiled-coil regions span residues 135 to 290 and 341 to 503; these read TDAI…LQTV and IRGT…LTAA.

This sequence belongs to the Sph1/Sph2 family.

Its function is as follows. Involved in cell-shape determination. Required for the formation of rods and wild-type-like motility. This chain is Smc-like protein Sph3, found in Haloferax volcanii (strain ATCC 29605 / DSM 3757 / JCM 8879 / NBRC 14742 / NCIMB 2012 / VKM B-1768 / DS2) (Halobacterium volcanii).